The sequence spans 292 residues: 5,10-methylenetetrahydrofolate reductase (292 aa).

E26 functions as the Proton donor/acceptor in the catalytic mechanism. Position 57 (T57) interacts with NADH. 14 residues coordinate FAD: Y58, A60, H86, R116, G117, D118, A130, Y150, H154, A157, D163, N166, R169, and K170. A (6S)-5-methyl-5,6,7,8-tetrahydrofolate-binding site is contributed by D118. An NADH-binding site is contributed by Q181. (6S)-5-methyl-5,6,7,8-tetrahydrofolate contacts are provided by Q181, Q217, and R277.

The protein belongs to the methylenetetrahydrofolate reductase family. Requires FAD as cofactor.

The catalysed reaction is (6S)-5-methyl-5,6,7,8-tetrahydrofolate + NAD(+) = (6R)-5,10-methylene-5,6,7,8-tetrahydrofolate + NADH + H(+). It participates in one-carbon metabolism; tetrahydrofolate interconversion. It functions in the pathway amino-acid biosynthesis; L-methionine biosynthesis via de novo pathway. In terms of biological role, catalyzes the NADH-dependent reduction of 5,10-methylenetetrahydrofolate to 5-methyltetrahydrofolate. Is required to provide the methyl group necessary for methionine synthetase to convert homocysteine to methionine; the methyl group is given by 5-methyltetrahydrofolate. This chain is 5,10-methylenetetrahydrofolate reductase (metF), found in Neisseria meningitidis serogroup B (strain ATCC BAA-335 / MC58).